The following is a 96-amino-acid chain: Co-chaperonin GroES (96 aa).

The protein belongs to the GroES chaperonin family. Heptamer of 7 subunits arranged in a ring. Interacts with the chaperonin GroEL.

The protein localises to the cytoplasm. Functionally, together with the chaperonin GroEL, plays an essential role in assisting protein folding. The GroEL-GroES system forms a nano-cage that allows encapsulation of the non-native substrate proteins and provides a physical environment optimized to promote and accelerate protein folding. GroES binds to the apical surface of the GroEL ring, thereby capping the opening of the GroEL channel. The polypeptide is Co-chaperonin GroES (Coxiella burnetii (strain Dugway 5J108-111)).